A 199-amino-acid chain; its full sequence is CASP-like protein 4B1 (199 aa).

Residues 1 to 32 form a disordered region; the sequence is MAMVASPDDIVKSPLPPPPPPPPPPLPPAHKD. Residues 1 to 53 lie on the Cytoplasmic side of the membrane; that stretch reads MAMVASPDDIVKSPLPPPPPPPPPPLPPAHKDKAAYNPYSGCPAHGGDDGLDG. Residues 14-28 show a composition bias toward pro residues; it reads PLPPPPPPPPPPLPP. A helical transmembrane segment spans residues 54 to 74; the sequence is IVLVLRAAAALLALVAMALVA. Residues 75–91 are Extracellular-facing; that stretch reads SCRHGDWMEFTRYQEYR. A helical membrane pass occupies residues 92 to 112; it reads YLLGVAVVASLYSALQAARTF. Topologically, residues 113 to 127 are cytoplasmic; that stretch reads RRMRAGTAYAATFLD. A helical transmembrane segment spans residues 128-148; sequence FAGDQAVGYLLITASSAALPI. The Extracellular portion of the chain corresponds to 149-163; it reads TIRMRSAVVNTFTDV. The helical transmembrane segment at 164 to 184 threads the bilayer; sequence VAASISFAFLAFAALAFSALI. Over 185–199 the chain is Cytoplasmic; that stretch reads AGFRLSSSSSSAYNY.

The protein belongs to the Casparian strip membrane proteins (CASP) family. Homodimer and heterodimers.

Its subcellular location is the cell membrane. The chain is CASP-like protein 4B1 from Oryza sativa subsp. japonica (Rice).